The sequence spans 301 residues: Sulfate adenylyltransferase subunit 2 (301 aa).

Positions 282-301 (RLIDRDEAGSMEKKKREGYF) are disordered.

Belongs to the PAPS reductase family. CysD subfamily. In terms of assembly, heterodimer composed of CysD, the smaller subunit, and CysN.

The enzyme catalyses sulfate + ATP + H(+) = adenosine 5'-phosphosulfate + diphosphate. Its pathway is sulfur metabolism; hydrogen sulfide biosynthesis; sulfite from sulfate: step 1/3. Functionally, with CysN forms the ATP sulfurylase (ATPS) that catalyzes the adenylation of sulfate producing adenosine 5'-phosphosulfate (APS) and diphosphate, the first enzymatic step in sulfur assimilation pathway. APS synthesis involves the formation of a high-energy phosphoric-sulfuric acid anhydride bond driven by GTP hydrolysis by CysN coupled to ATP hydrolysis by CysD. The chain is Sulfate adenylyltransferase subunit 2 from Chelativorans sp. (strain BNC1).